We begin with the raw amino-acid sequence, 184 residues long: Peptide deformylase (184 aa).

Residues cysteine 111 and histidine 154 each coordinate Fe cation. Glutamate 155 is an active-site residue. Residue histidine 158 coordinates Fe cation.

It belongs to the polypeptide deformylase family. Fe(2+) serves as cofactor.

The catalysed reaction is N-terminal N-formyl-L-methionyl-[peptide] + H2O = N-terminal L-methionyl-[peptide] + formate. In terms of biological role, removes the formyl group from the N-terminal Met of newly synthesized proteins. Requires at least a dipeptide for an efficient rate of reaction. N-terminal L-methionine is a prerequisite for activity but the enzyme has broad specificity at other positions. This is Peptide deformylase from Macrococcus caseolyticus (strain JCSC5402) (Macrococcoides caseolyticum).